Reading from the N-terminus, the 601-residue chain is MNERQKFTRNFSIIAHVDHGKSTLADRLLEIGLVTDKRTQKNQILDSMDIERERGITIKANNASFDYHAKDGNIYHLNLIDTPGHVDFTYEVSRSLAACEGVLLIVDASQGVEAQTLANLYLAMDLDLRIIPVINKIDLPSADIDKCKLMIEESLGLNPEEAIPISAKTGLNVQEVLEAICYLLPPPVGDVDAPLKALIYDSFFDTYMGVVAKVRLYDGRLKKGEMIHMMNIGRQFTVTEVGINRLSMVACEELQAGDVGYVVAGMKKMGDAKTGDTITHANRQTAEDVKGFKDAKPMVFAGLFPINGEDFDALVDAIEKLKLNDSALTFERENSAALGFGFRVGYLGLLHMEIVQERLEREFNLALITTAPSVKFRITTTKDEVIEVDNPSKWPDPILIGKSEEPFVKATIIAPESYVGNIMSLVIEKRGIHLDTVYLSKDKLQLTYELPLAELIFEFYDKLKSYTKGYASLDYEEVGYRDSKLVRMDILVNGEPVDALSSIVHKTKAEERGRVIIEKLKDLIPRHQFMIPLQAAIGSKVVARESISALRKNVTAKCYGGDISRKKKLLEKQKEGKKRMKQIGNVEIPQEAFLSILKTGD.

Positions 6–188 (KFTRNFSIIA…AICYLLPPPV (183 aa)) constitute a tr-type G domain. Residues 18–23 (DHGKST) and 135–138 (NKID) each bind GTP.

Belongs to the TRAFAC class translation factor GTPase superfamily. Classic translation factor GTPase family. LepA subfamily.

It localises to the cell inner membrane. The catalysed reaction is GTP + H2O = GDP + phosphate + H(+). Functionally, required for accurate and efficient protein synthesis under certain stress conditions. May act as a fidelity factor of the translation reaction, by catalyzing a one-codon backward translocation of tRNAs on improperly translocated ribosomes. Back-translocation proceeds from a post-translocation (POST) complex to a pre-translocation (PRE) complex, thus giving elongation factor G a second chance to translocate the tRNAs correctly. Binds to ribosomes in a GTP-dependent manner. The polypeptide is Elongation factor 4 (Leptospira biflexa serovar Patoc (strain Patoc 1 / Ames)).